Consider the following 347-residue polypeptide: tRNA N6-adenosine threonylcarbamoyltransferase (347 aa).

His111 and His115 together coordinate Fe cation. Residues 134–138 (LISGG), Asp167, Gly180, and Asn277 contribute to the substrate site. Residue Asp305 participates in Fe cation binding.

Belongs to the KAE1 / TsaD family. Requires Fe(2+) as cofactor.

It is found in the cytoplasm. The catalysed reaction is L-threonylcarbamoyladenylate + adenosine(37) in tRNA = N(6)-L-threonylcarbamoyladenosine(37) in tRNA + AMP + H(+). Functionally, required for the formation of a threonylcarbamoyl group on adenosine at position 37 (t(6)A37) in tRNAs that read codons beginning with adenine. Is involved in the transfer of the threonylcarbamoyl moiety of threonylcarbamoyl-AMP (TC-AMP) to the N6 group of A37, together with TsaE and TsaB. TsaD likely plays a direct catalytic role in this reaction. This is tRNA N6-adenosine threonylcarbamoyltransferase from Actinobacillus pleuropneumoniae serotype 5b (strain L20).